The chain runs to 699 residues: Elongation factor G (699 aa).

One can recognise a tr-type G domain in the interval 10–292 (NRTRNIGIMA…AVIDYLPSPT (283 aa)). Residues 19–26 (AHIDAGKT), 90–94 (DTPGH), and 144–147 (NKMD) each bind GTP. The tract at residues 292-312 (TDVPAIRGEEDDGSEGSRSAS) is disordered.

Belongs to the TRAFAC class translation factor GTPase superfamily. Classic translation factor GTPase family. EF-G/EF-2 subfamily.

It is found in the cytoplasm. Functionally, catalyzes the GTP-dependent ribosomal translocation step during translation elongation. During this step, the ribosome changes from the pre-translocational (PRE) to the post-translocational (POST) state as the newly formed A-site-bound peptidyl-tRNA and P-site-bound deacylated tRNA move to the P and E sites, respectively. Catalyzes the coordinated movement of the two tRNA molecules, the mRNA and conformational changes in the ribosome. The chain is Elongation factor G from Coxiella burnetii (strain CbuG_Q212) (Coxiella burnetii (strain Q212)).